We begin with the raw amino-acid sequence, 487 residues long: N-succinylglutamate 5-semialdehyde dehydrogenase (487 aa).

Residue 221–226 (GSSDTG) participates in NAD(+) binding. Active-site residues include glutamate 244 and cysteine 278.

It belongs to the aldehyde dehydrogenase family. AstD subfamily.

The enzyme catalyses N-succinyl-L-glutamate 5-semialdehyde + NAD(+) + H2O = N-succinyl-L-glutamate + NADH + 2 H(+). Its pathway is amino-acid degradation; L-arginine degradation via AST pathway; L-glutamate and succinate from L-arginine: step 4/5. In terms of biological role, catalyzes the NAD-dependent reduction of succinylglutamate semialdehyde into succinylglutamate. In Burkholderia lata (strain ATCC 17760 / DSM 23089 / LMG 22485 / NCIMB 9086 / R18194 / 383), this protein is N-succinylglutamate 5-semialdehyde dehydrogenase.